The primary structure comprises 229 residues: 3-dehydroquinate dehydratase (229 aa).

3-dehydroquinate is bound by residues E29–R31 and R56. H120 functions as the Proton donor/acceptor in the catalytic mechanism. Residue K146 is the Schiff-base intermediate with substrate of the active site. The 3-dehydroquinate site is built by R187, T208, and Q212.

The protein belongs to the type-I 3-dehydroquinase family. As to quaternary structure, homodimer.

The enzyme catalyses 3-dehydroquinate = 3-dehydroshikimate + H2O. The protein operates within metabolic intermediate biosynthesis; chorismate biosynthesis; chorismate from D-erythrose 4-phosphate and phosphoenolpyruvate: step 3/7. In terms of biological role, involved in the third step of the chorismate pathway, which leads to the biosynthesis of aromatic amino acids. Catalyzes the cis-dehydration of 3-dehydroquinate (DHQ) and introduces the first double bond of the aromatic ring to yield 3-dehydroshikimate. The chain is 3-dehydroquinate dehydratase from Haloarcula marismortui (strain ATCC 43049 / DSM 3752 / JCM 8966 / VKM B-1809) (Halobacterium marismortui).